Consider the following 111-residue polypeptide: Nucleoid-associated protein NMC1380 (111 aa).

The protein belongs to the YbaB/EbfC family. Homodimer.

The protein resides in the cytoplasm. It is found in the nucleoid. Its function is as follows. Binds to DNA and alters its conformation. May be involved in regulation of gene expression, nucleoid organization and DNA protection. The polypeptide is Nucleoid-associated protein NMC1380 (Neisseria meningitidis serogroup C / serotype 2a (strain ATCC 700532 / DSM 15464 / FAM18)).